The following is a 232-amino-acid chain: Putative N-acetylmannosamine-6-phosphate 2-epimerase (232 aa).

Belongs to the NanE family.

The catalysed reaction is an N-acyl-D-glucosamine 6-phosphate = an N-acyl-D-mannosamine 6-phosphate. It participates in amino-sugar metabolism; N-acetylneuraminate degradation; D-fructose 6-phosphate from N-acetylneuraminate: step 3/5. Functionally, converts N-acetylmannosamine-6-phosphate (ManNAc-6-P) to N-acetylglucosamine-6-phosphate (GlcNAc-6-P). The polypeptide is Putative N-acetylmannosamine-6-phosphate 2-epimerase (Corynebacterium glutamicum (strain R)).